Reading from the N-terminus, the 158-residue chain is Lipoprotein signal peptidase (158 aa).

A run of 3 helical transmembrane segments spans residues 12 to 32 (LFWW…AWIV), 46 to 66 (IIPG…FSLF), and 71 to 91 (IWLR…AILG). Active-site residues include D124 and D140. Residues 135 to 155 (VFNVADIAINIGIVCLLWSAW) traverse the membrane as a helical segment.

This sequence belongs to the peptidase A8 family.

It is found in the cell inner membrane. It catalyses the reaction Release of signal peptides from bacterial membrane prolipoproteins. Hydrolyzes -Xaa-Yaa-Zaa-|-(S,diacylglyceryl)Cys-, in which Xaa is hydrophobic (preferably Leu), and Yaa (Ala or Ser) and Zaa (Gly or Ala) have small, neutral side chains.. It functions in the pathway protein modification; lipoprotein biosynthesis (signal peptide cleavage). In terms of biological role, this protein specifically catalyzes the removal of signal peptides from prolipoproteins. The chain is Lipoprotein signal peptidase from Thermosynechococcus vestitus (strain NIES-2133 / IAM M-273 / BP-1).